The following is a 271-amino-acid chain: Glutamate racemase (271 aa).

Residues 12 to 13 (DS) and 44 to 45 (YG) contribute to the substrate site. C75 (proton donor/acceptor) is an active-site residue. 76–77 (NS) serves as a coordination point for substrate. Residue C185 is the Proton donor/acceptor of the active site. 186–187 (TH) contributes to the substrate binding site.

It belongs to the aspartate/glutamate racemases family.

The enzyme catalyses L-glutamate = D-glutamate. It participates in cell wall biogenesis; peptidoglycan biosynthesis. Its function is as follows. Provides the (R)-glutamate required for cell wall biosynthesis. The sequence is that of Glutamate racemase from Mycobacterium bovis (strain BCG / Pasteur 1173P2).